Here is a 235-residue protein sequence, read N- to C-terminus: Orotidine 5'-phosphate decarboxylase (235 aa).

Substrate contacts are provided by residues aspartate 9, lysine 31, 58–67 (DLKFHDIPNT), threonine 121, arginine 180, glutamine 190, glycine 210, and arginine 211. Residue lysine 60 is the Proton donor of the active site.

Belongs to the OMP decarboxylase family. Type 1 subfamily. In terms of assembly, homodimer.

It carries out the reaction orotidine 5'-phosphate + H(+) = UMP + CO2. The protein operates within pyrimidine metabolism; UMP biosynthesis via de novo pathway; UMP from orotate: step 2/2. Its function is as follows. Catalyzes the decarboxylation of orotidine 5'-monophosphate (OMP) to uridine 5'-monophosphate (UMP). The chain is Orotidine 5'-phosphate decarboxylase from Nitratidesulfovibrio vulgaris (strain ATCC 29579 / DSM 644 / CCUG 34227 / NCIMB 8303 / VKM B-1760 / Hildenborough) (Desulfovibrio vulgaris).